The chain runs to 565 residues: Genetic interactor of prohibitins 3, mitochondrial (565 aa).

A CP-type G domain is found at 129-315; that stretch reads TDVLEKIPRG…IYDLPGFTTN (187 aa).

This sequence belongs to the TRAFAC class YlqF/YawG GTPase family. GEP3 subfamily.

The protein localises to the mitochondrion. In terms of biological role, may be involved in the mitochondrial lipid metabolism. This is Genetic interactor of prohibitins 3, mitochondrial (GEP3) from Zygosaccharomyces rouxii (strain ATCC 2623 / CBS 732 / NBRC 1130 / NCYC 568 / NRRL Y-229).